A 115-amino-acid chain; its full sequence is U3-lycotoxin-Ls1p (115 aa).

An N-terminal signal peptide occupies residues 1 to 20; it reads MKFVLLFGVLLVTLFSYSSA. Residues 21-44 constitute a propeptide that is removed on maturation; it reads EMFDDFDQADEDELLSLIEKEEAR. Intrachain disulfides connect Cys48–Cys63, Cys55–Cys72, Cys62–Cys87, and Cys74–Cys85.

Belongs to the neurotoxin 19 (CSTX) family. 01 subfamily. In terms of tissue distribution, expressed by the venom gland.

It localises to the secreted. The polypeptide is U3-lycotoxin-Ls1p (Lycosa singoriensis (Wolf spider)).